The sequence spans 340 residues: Meiotic recombination protein DMC1/LIM15 homolog (340 aa).

Residue 126-133 (GEFRTGKT) coordinates ATP. Arginine 230 provides a ligand contact to dsDNA. SsDNA contacts are provided by arginine 230, phenylalanine 233, arginine 236, arginine 242, and arginine 311. Residues arginine 236 and arginine 242 each coordinate dsDNA.

The protein belongs to the RecA family. DMC1 subfamily. In terms of assembly, double stacked ring-shaped homooctamer. Interacts with BRCA2. Interacts with the MND1-PSMC3IP heterodimer. Interacts with RAD51AP1; the interaction is direct and stimulates DMC1-mediated homologous recombination. In terms of tissue distribution, testis.

The protein resides in the nucleus. Its subcellular location is the chromosome. Participates in meiotic recombination, specifically in homologous strand assimilation, which is required for the resolution of meiotic double-strand breaks. The protein is Meiotic recombination protein DMC1/LIM15 homolog of Mus musculus (Mouse).